The chain runs to 130 residues: Small ribosomal subunit protein uS8 (130 aa).

It belongs to the universal ribosomal protein uS8 family.

It is found in the cytoplasm. In Brassica napus (Rape), this protein is Small ribosomal subunit protein uS8 (RPS15A).